Consider the following 446-residue polypeptide: Glutamine synthetase (446 aa).

The GS beta-grasp domain maps to 18-103 (ENVRYLRLQF…LICDVYKTDG (86 aa)). Positions 110 to 446 (PRANLKRVLK…WERDQYMKQY (337 aa)) constitute a GS catalytic domain. Mg(2+) contacts are provided by Glu134 and Glu136. Glu186 contacts ATP. Glu191 and Glu198 together coordinate Mg(2+). L-glutamate contacts are provided by residues 242–243 (NG) and Gly243. His247 is a Mg(2+) binding site. ATP is bound at residue Ser251. Positions 300, 306, and 318 each coordinate L-glutamate. Arg318 and Arg323 together coordinate ATP. Residue Glu335 participates in Mg(2+) binding. Residue Arg337 coordinates L-glutamate.

This sequence belongs to the glutamine synthetase family. As to quaternary structure, oligomer of 12 subunits arranged in the form of two hexagons. In its feedback-inhibited form, interacts with TnrA in order to block its DNA-binding activity. It depends on Mg(2+) as a cofactor.

The protein resides in the cytoplasm. The enzyme catalyses L-glutamate + NH4(+) + ATP = L-glutamine + ADP + phosphate + H(+). Inhibited by glutamine. In terms of biological role, glutamine synthetase (GS) is an unusual multitasking protein that functions as an enzyme, a transcription coregulator, and a chaperone in ammonium assimilation and in the regulation of genes involved in nitrogen metabolism. It catalyzes the ATP-dependent biosynthesis of glutamine from glutamate and ammonia. Feedback-inhibited GlnA also interacts with and regulates the activity of the transcriptional regulator TnrA. During nitrogen limitation, TnrA is in its DNA-binding active state and turns on the transcription of genes required for nitrogen assimilation. Under conditions of nitrogen excess, feedback-inhibited GlnA forms a stable complex with TnrA, which inhibits its DNA-binding activity. In contrast, feedback-inhibited GlnA acts as a chaperone to stabilize the DNA-binding activity of GlnR, which represses the transcription of nitrogen assimilation genes. This chain is Glutamine synthetase, found in Staphylococcus aureus (strain MRSA252).